Consider the following 365-residue polypeptide: L-lactate oxidase (365 aa).

The FMN hydroxy acid dehydrogenase domain maps to 2–365; it reads TAISSPINLF…QDIDTSFLHL (364 aa). Tyr28 lines the pyruvate pocket. FMN-binding positions include 81–83, Ser110, and Gln135; that span reads PMA. Residue Tyr137 participates in pyruvate binding. Residue Thr163 coordinates FMN. Arg172 provides a ligand contact to pyruvate. FMN contacts are provided by Lys239 and Ser261. Residues His263 and Arg266 each coordinate pyruvate. Catalysis depends on His263, which acts as the Proton acceptor. Residues 294–298 and Arg318 contribute to the FMN site; that span reads DGGIR.

Belongs to the FMN-dependent alpha-hydroxy acid dehydrogenase family. As to quaternary structure, homotetramer. Requires FMN as cofactor.

It catalyses the reaction (S)-lactate + O2 = pyruvate + H2O2. The enzyme catalyses glyoxylate + O2 + H2O = oxalate + H2O2 + H(+). In terms of biological role, catalyzes the oxidation of (S)-lactate (L-lactate) to pyruvate, with a reduction of O2 to H2O2. In extant N2-fixing cyanobacteria such as Nostoc, this enzyme primarily serves as an O2-scavenging enzyme, protecting nitrogenase that is extremely sensitive to O2, and is therefore an essential partner in N2 fixation. Also shows clear oxidase activity with glyoxylate in vitro, and low activity with glycerate, hydroxypyruvate and glycolate. The very low glycolate oxidase activity indicates that this enzyme is unlikely to be involved in photorespiratory glycolate metabolism, a pathway that seems to exist in this cyanobacterium, but in which the oxidation of glycolate is taken over by glycolate dehydrogenase (GlcD). Is not able to use D-lactate as substrate and does not show any dehydrogenase activity with NAD(+) or NADP(+). In Nostoc sp. (strain PCC 7120 / SAG 25.82 / UTEX 2576), this protein is L-lactate oxidase.